Reading from the N-terminus, the 211-residue chain is Arginine exporter protein ArgO (211 aa).

The next 6 helical transmembrane spans lie at 1-21 (MISY…PLGP), 37-57 (LMIA…GIFG), 68-88 (LLAL…LGAL), 111-131 (IIAT…DTFV), 147-167 (WFAL…ALLA), and 179-199 (AQRI…FQLA).

Belongs to the LysE/ArgO transporter (TC 2.A.75) family.

Its subcellular location is the cell inner membrane. It carries out the reaction L-arginine(in) = L-arginine(out). Involved in the export of arginine. Important to control the intracellular level of arginine and the correct balance between arginine and lysine. The polypeptide is Arginine exporter protein ArgO (Salmonella enteritidis PT4 (strain P125109)).